Here is a 216-residue protein sequence, read N- to C-terminus: 3-keto-L-gulonate-6-phosphate decarboxylase UlaD (216 aa).

Asp-11 contributes to the substrate binding site. The Mg(2+) site is built by Glu-33 and Asp-62. Arg-192 is a substrate binding site.

The protein belongs to the HPS/KGPDC family. KGPDC subfamily. In terms of assembly, homodimer. Mg(2+) serves as cofactor.

The enzyme catalyses 3-dehydro-L-gulonate 6-phosphate + H(+) = L-xylulose 5-phosphate + CO2. It functions in the pathway cofactor degradation; L-ascorbate degradation; D-xylulose 5-phosphate from L-ascorbate: step 2/4. Functionally, catalyzes the decarboxylation of 3-keto-L-gulonate-6-P into L-xylulose-5-P. Is involved in the anaerobic L-ascorbate utilization. This chain is 3-keto-L-gulonate-6-phosphate decarboxylase UlaD, found in Escherichia fergusonii (strain ATCC 35469 / DSM 13698 / CCUG 18766 / IAM 14443 / JCM 21226 / LMG 7866 / NBRC 102419 / NCTC 12128 / CDC 0568-73).